Reading from the N-terminus, the 626-residue chain is DNA mismatch repair protein MutL (626 aa).

The interval 377 to 413 is disordered; it reads EEPQAVKQPTQLWQPSTKPIIEEPIQEEKSWDSNEEG. Over residues 383–393 the composition is skewed to polar residues; it reads KQPTQLWQPST.

Belongs to the DNA mismatch repair MutL/HexB family.

In terms of biological role, this protein is involved in the repair of mismatches in DNA. It is required for dam-dependent methyl-directed DNA mismatch repair. May act as a 'molecular matchmaker', a protein that promotes the formation of a stable complex between two or more DNA-binding proteins in an ATP-dependent manner without itself being part of a final effector complex. The polypeptide is DNA mismatch repair protein MutL (Bacillus anthracis (strain A0248)).